We begin with the raw amino-acid sequence, 460 residues long: MTNYAIILAAGKGTRMTSDLPKVLHKVSGLTMLEHVFRSVKAISPEKAVTVIGHKSEKVRAVLADQSAFVHQTEQLGTGHAVMMAETQLEGLEGHTLVIAGDTPLITGESLKSLIDFHVNHKNVATILTATAQDPFGYGRIVRNKDGEVIKIVEQKDANEYEQQLKEINTGTYVFDNKRLFEALKCITTNNAQGEYYLTDVVAIFRANKEKVGAYILRDFNESLGVNDRVALATAETVMRQRITQKHMVNGVTFQNPETVYIESDVEIAPDVLIEGNVTLKGRTHIGSGTVLTNGTYIVDSEIGQGSIITNSMIESSVLAAGVTVGPYAHLRPGTTLDREVHIGNFVEVKGSHIGEKTKAGHLTYIGNAQVGSSVNVGAGTITVNYDGQNKYETVIGDHAFIGSNSTLIAPLEVGDNALTAAGSTISKTVPADSIVIGRSRQVTKEGYAKRLAHHPSRSK.

A pyrophosphorylase region spans residues 1-229; the sequence is MTNYAIILAA…FNESLGVNDR (229 aa). UDP-N-acetyl-alpha-D-glucosamine contacts are provided by residues 8-11, lysine 22, glutamine 72, and 77-78; these read LAAG and GT. Aspartate 102 is a binding site for Mg(2+). UDP-N-acetyl-alpha-D-glucosamine is bound by residues glycine 139, glutamate 154, asparagine 169, and asparagine 227. Position 227 (asparagine 227) interacts with Mg(2+). Residues 230–250 form a linker region; it reads VALATAETVMRQRITQKHMVN. Residues 251–460 form an N-acetyltransferase region; the sequence is GVTFQNPETV…RLAHHPSRSK (210 aa). The UDP-N-acetyl-alpha-D-glucosamine site is built by arginine 332 and lysine 350. The active-site Proton acceptor is histidine 362. Tyrosine 365 and asparagine 376 together coordinate UDP-N-acetyl-alpha-D-glucosamine. Acetyl-CoA-binding positions include alanine 379, 385–386, serine 404, alanine 422, and arginine 439; that span reads NY.

In the N-terminal section; belongs to the N-acetylglucosamine-1-phosphate uridyltransferase family. This sequence in the C-terminal section; belongs to the transferase hexapeptide repeat family. As to quaternary structure, homotrimer. It depends on Mg(2+) as a cofactor.

The protein resides in the cytoplasm. The catalysed reaction is alpha-D-glucosamine 1-phosphate + acetyl-CoA = N-acetyl-alpha-D-glucosamine 1-phosphate + CoA + H(+). It catalyses the reaction N-acetyl-alpha-D-glucosamine 1-phosphate + UTP + H(+) = UDP-N-acetyl-alpha-D-glucosamine + diphosphate. The protein operates within nucleotide-sugar biosynthesis; UDP-N-acetyl-alpha-D-glucosamine biosynthesis; N-acetyl-alpha-D-glucosamine 1-phosphate from alpha-D-glucosamine 6-phosphate (route II): step 2/2. Its pathway is nucleotide-sugar biosynthesis; UDP-N-acetyl-alpha-D-glucosamine biosynthesis; UDP-N-acetyl-alpha-D-glucosamine from N-acetyl-alpha-D-glucosamine 1-phosphate: step 1/1. It functions in the pathway bacterial outer membrane biogenesis; LPS lipid A biosynthesis. Functionally, catalyzes the last two sequential reactions in the de novo biosynthetic pathway for UDP-N-acetylglucosamine (UDP-GlcNAc). The C-terminal domain catalyzes the transfer of acetyl group from acetyl coenzyme A to glucosamine-1-phosphate (GlcN-1-P) to produce N-acetylglucosamine-1-phosphate (GlcNAc-1-P), which is converted into UDP-GlcNAc by the transfer of uridine 5-monophosphate (from uridine 5-triphosphate), a reaction catalyzed by the N-terminal domain. This is Bifunctional protein GlmU from Streptococcus pyogenes serotype M5 (strain Manfredo).